The following is a 436-amino-acid chain: 3-ketoacyl-CoA thiolase (436 aa).

Cysteine 99 acts as the Acyl-thioester intermediate in catalysis. Residues histidine 392 and cysteine 422 each act as proton acceptor in the active site.

Belongs to the thiolase-like superfamily. Thiolase family. Heterotetramer of two alpha chains (FadJ) and two beta chains (FadI).

It is found in the cytoplasm. It catalyses the reaction an acyl-CoA + acetyl-CoA = a 3-oxoacyl-CoA + CoA. The protein operates within lipid metabolism; fatty acid beta-oxidation. Functionally, catalyzes the final step of fatty acid oxidation in which acetyl-CoA is released and the CoA ester of a fatty acid two carbons shorter is formed. This is 3-ketoacyl-CoA thiolase from Enterobacter sp. (strain 638).